Consider the following 160-residue polypeptide: Major pollen allergen Bet v 1-J (160 aa).

4 residues coordinate brassinolide: lysine 55, tyrosine 82, tyrosine 84, and asparagine 101. Hydrophobic ligand pocket stretches follow at residues lysine 116 to asparagine 118 and glutamine 133 to glycine 141.

This sequence belongs to the BetVI family. As to expression, pollen.

It localises to the cytoplasm. May be a general steroid carrier protein. The polypeptide is Major pollen allergen Bet v 1-J (Betula pendula (European white birch)).